The primary structure comprises 640 residues: Choline O-acetyltransferase (640 aa).

Position 17 is a phosphoserine (serine 17). Histidine 334 (proton acceptor) is an active-site residue. Serine 365 is subject to Phosphoserine. CoA is bound by residues 412–424 (GKTFIKKQKYSPD), serine 450, and glutamine 551. Residues 614–640 (CSSRQPADSKPPAPKEKARGPSQAKQS) form a disordered region.

It belongs to the carnitine/choline acetyltransferase family. As to quaternary structure, monomer.

The catalysed reaction is choline + acetyl-CoA = acetylcholine + CoA. In terms of biological role, catalyzes the reversible synthesis of acetylcholine (ACh) from acetyl CoA and choline at cholinergic synapses. The polypeptide is Choline O-acetyltransferase (Chat) (Rattus norvegicus (Rat)).